Consider the following 226-residue polypeptide: Uracil-DNA glycosylase (226 aa).

Catalysis depends on Asp-65, which acts as the Proton acceptor.

The protein belongs to the uracil-DNA glycosylase (UDG) superfamily. UNG family.

The protein localises to the cytoplasm. It catalyses the reaction Hydrolyzes single-stranded DNA or mismatched double-stranded DNA and polynucleotides, releasing free uracil.. Its function is as follows. Excises uracil residues from the DNA which can arise as a result of misincorporation of dUMP residues by DNA polymerase or due to deamination of cytosine. In Bacillus pumilus (strain SAFR-032), this protein is Uracil-DNA glycosylase.